We begin with the raw amino-acid sequence, 655 residues long: SRSF protein kinase 1 (655 aa).

Residues 1–57 are disordered; the sequence is MERKVLALQARKKRTKAKKDKAQRKSETQHRGSAPHSESDLPEQEEEILGSDDDEQE. Residues 10-22 are compositionally biased toward basic residues; sequence ARKKRTKAKKDKA. Positions 40–57 are enriched in acidic residues; the sequence is DLPEQEEEILGSDDDEQE. The residue at position 51 (Ser-51) is a Phosphoserine; by CK2. The region spanning 80-653 is the Protein kinase domain; sequence YHVIRKLGWG…AAECLRHPWL (574 aa). Residues 86–94, Lys-109, and 166–168 contribute to the ATP site; these read LGWGHFSTV and EVL. Asp-213 serves as the catalytic Proton acceptor. Disordered stretches follow at residues 238–341 and 397–417; these read WQRS…QDQT and FLSS…CTPI. Basic residues predominate over residues 265-276; the sequence is KNKKKKLKKKQK. Basic and acidic residues-rich tracts occupy residues 277-288 and 304-318; these read RQAELLEKRMQE and NKQE…RPLK. Ser-309, Ser-311, and Ser-333 each carry phosphoserine. Phosphoserine; by CK2 is present on Ser-555.

It belongs to the protein kinase superfamily. CMGC Ser/Thr protein kinase family. In terms of assembly, monomer. Isoform 2 is found in a multisubunit complex containing seven proteins, named toposome, which separates entangled circular chromatin DNA during chromosome segregation. Isoform 2 interacts with DNAJC8 and AHSA1/AHA1 and this mediates formation of a complex with the Hsp70 /Hsp90 machinery. Isoform 1 is found in a complex with: DHX9, MOV10, MATR3, HNRNPU, NCL, DDX21, HSD17B4, PABPC1, HNRNPM, IGF2BP1, SYNCRIP, RPL3, VIM, YBX1, NPM1, HNRNPA2B1, HNRNPC, RPLP0, RPL7A and RALY. Isoform 2 binds to IGF2BP1, SYNCRIP, HNRNPA2B1 and HNRNPC. Isoform 1 and isoform 2 interact with SAFB which inhibits its activity. Isoform 2 interacts with SAFB2 which inhibits its activity. (Microbial infection) Isoform 2 interacts with HHV-1 ICP27 protein. The cofactor is Mg(2+). In terms of tissue distribution, isoform 2 is predominantly expressed in the testis but is also present at lower levels in heart, ovary, small intestine, liver, kidney, pancreas and skeletal muscle. Isoform 1 is only seen in the testis, at lower levels than isoform 2. Highly expressed in different erythroid and lymphoid cell lines, with isoform 2 being far more abundant than isoform 1.

The protein resides in the cytoplasm. Its subcellular location is the nucleus. It localises to the nucleus matrix. The protein localises to the microsome. It is found in the nucleoplasm. The protein resides in the nucleus speckle. Its subcellular location is the chromosome. It carries out the reaction L-seryl-[protein] + ATP = O-phospho-L-seryl-[protein] + ADP + H(+). It catalyses the reaction L-threonyl-[protein] + ATP = O-phospho-L-threonyl-[protein] + ADP + H(+). With respect to regulation, activated by phosphorylation on Ser-51 and Ser-555. Serine/arginine-rich protein-specific kinase which specifically phosphorylates its substrates at serine residues located in regions rich in arginine/serine dipeptides, known as RS domains and is involved in the phosphorylation of SR splicing factors and the regulation of splicing. Plays a central role in the regulatory network for splicing, controlling the intranuclear distribution of splicing factors in interphase cells and the reorganization of nuclear speckles during mitosis. Can influence additional steps of mRNA maturation, as well as other cellular activities, such as chromatin reorganization in somatic and sperm cells and cell cycle progression. Isoform 2 phosphorylates SFRS2, ZRSR2, LBR and PRM1. Isoform 2 phosphorylates SRSF1 using a directional (C-terminal to N-terminal) and a dual-track mechanism incorporating both processive phosphorylation (in which the kinase stays attached to the substrate after each round of phosphorylation) and distributive phosphorylation steps (in which the kinase and substrate dissociate after each phosphorylation event). The RS domain of SRSF1 binds first to a docking groove in the large lobe of the kinase domain of SRPK1. This induces certain structural changes in SRPK1 and/or RRM2 domain of SRSF1, allowing RRM2 to bind the kinase and initiate phosphorylation. The cycles continue for several phosphorylation steps in a processive manner (steps 1-8) until the last few phosphorylation steps (approximately steps 9-12). During that time, a mechanical stress induces the unfolding of the beta-4 motif in RRM2, which then docks at the docking groove of SRPK1. This also signals RRM2 to begin to dissociate, which facilitates SRSF1 dissociation after phosphorylation is completed. Isoform 2 can mediate hepatitis B virus (HBV) core protein phosphorylation. It plays a negative role in the regulation of HBV replication through a mechanism not involving the phosphorylation of the core protein but by reducing the packaging efficiency of the pregenomic RNA (pgRNA) without affecting the formation of the viral core particles. Isoform 1 and isoform 2 can induce splicing of exon 10 in MAPT/TAU. The ratio of isoform 1/isoform 2 plays a decisive role in determining cell fate in K-562 leukaemic cell line: isoform 2 favors proliferation where as isoform 1 favors differentiation. The polypeptide is SRSF protein kinase 1 (Homo sapiens (Human)).